Consider the following 241-residue polypeptide: Thiamine import ATP-binding protein ThiQ (241 aa).

Positions 7 to 235 (IRLSDVRFSY…AGPEALRHYI (229 aa)) constitute an ABC transporter domain. 37 to 44 (GPSGSGKS) provides a ligand contact to ATP.

The protein belongs to the ABC transporter superfamily. Thiamine importer (TC 3.A.1.19.1) family. The complex is composed of two ATP-binding proteins (ThiQ), two transmembrane proteins (ThiP) and a solute-binding protein (ThiB).

Its subcellular location is the cell inner membrane. The catalysed reaction is thiamine(out) + ATP + H2O = thiamine(in) + ADP + phosphate + H(+). Functionally, part of the ABC transporter complex ThiBPQ involved in thiamine import. Responsible for energy coupling to the transport system. The chain is Thiamine import ATP-binding protein ThiQ from Brucella abortus biovar 1 (strain 9-941).